Reading from the N-terminus, the 347-residue chain is Phosphoribosylformylglycinamidine cyclo-ligase (347 aa).

This sequence belongs to the AIR synthase family.

The protein resides in the cytoplasm. It catalyses the reaction 2-formamido-N(1)-(5-O-phospho-beta-D-ribosyl)acetamidine + ATP = 5-amino-1-(5-phospho-beta-D-ribosyl)imidazole + ADP + phosphate + H(+). It participates in purine metabolism; IMP biosynthesis via de novo pathway; 5-amino-1-(5-phospho-D-ribosyl)imidazole from N(2)-formyl-N(1)-(5-phospho-D-ribosyl)glycinamide: step 2/2. The sequence is that of Phosphoribosylformylglycinamidine cyclo-ligase from Prochlorococcus marinus (strain MIT 9312).